Consider the following 853-residue polypeptide: Trimethylguanosine synthase (853 aa).

Residues 54 to 84 (NNAGDQGTEEEEDGHSNGTAESHSPNESDLD) are disordered. Residue Thr-61 is modified to Phosphothreonine. Polar residues predominate over residues 69-80 (SNGTAESHSPNE). Phosphoserine occurs at positions 81, 85, 92, and 139. Tyr-144 is subject to Phosphotyrosine. Ser-152 carries the post-translational modification Phosphoserine. Disordered regions lie at residues 328–437 (VEQS…DDNG) and 523–549 (ETSQ…QDMS). Residues 365 to 383 (KENDISENRSSDQPAKELQ) are compositionally biased toward basic and acidic residues. Residues Ser-405 and Ser-431 each carry the phosphoserine modification. The span at 424–435 (DVDENPDSEVDD) shows a compositional bias: acidic residues. A compositionally biased stretch (polar residues) spans 526–541 (QDSLSQNKMQDTCTSS). Position 572 is a phosphoserine (Ser-572). The segment at 594–623 (CSTEEIPNSPHAETEVEIKKKKKKNKNKKI) is disordered. The segment covering 612 to 621 (KKKKKKNKNK) has biased composition (basic residues). An S-adenosyl-L-methionine-binding site is contributed by Asp-711.

Belongs to the methyltransferase superfamily. Trimethylguanosine synthase family. As to quaternary structure, may form homooligomers. Interacts with CREBBP/CBP, EED/WAIT1, EP300/P300, NCOA6/PRIP, PPARBP/PBP and SMN. Ubiquitously expressed.

It is found in the cytoplasm. It localises to the nucleus. The protein resides in the cajal body. The protein localises to the nucleolus. The enzyme catalyses a 5'-end (N(7)-methyl 5'-triphosphoguanosine)-ribonucleoside in snRNA + S-adenosyl-L-methionine = a 5'-end (N(2),N(7)-dimethyl 5'-triphosphoguanosine)-ribonucleoside in snRNA + S-adenosyl-L-homocysteine + H(+). The catalysed reaction is a 5'-end (N(7)-methyl 5'-triphosphoguanosine)-ribonucleoside in snoRNA + S-adenosyl-L-methionine = a 5'-end (N(2),N(7)-dimethyl 5'-triphosphoguanosine)-ribonucleoside in snoRNA + S-adenosyl-L-homocysteine + H(+). It catalyses the reaction a 5'-end (N(2),N(7)-dimethyl 5'-triphosphoguanosine)-ribonucleoside in snRNA + S-adenosyl-L-methionine = a 5'-end (N(2),N(2),N(7)-trimethyl 5'-triphosphoguanosine)-ribonucleoside in snRNA + S-adenosyl-L-homocysteine + H(+). It carries out the reaction a 5'-end (N(2),N(7)-dimethyl 5'-triphosphoguanosine)-ribonucleoside in snoRNA + S-adenosyl-L-methionine = a 5'-end (N(2),N(2),N(7)-trimethyl 5'-triphosphoguanosine)-ribonucleoside in snoRNA + S-adenosyl-L-homocysteine + H(+). Catalyzes the 2 serial methylation steps for the conversion of the 7-monomethylguanosine (m(7)G) caps of snRNAs and snoRNAs to a 2,2,7-trimethylguanosine (m(2,2,7)G) cap structure. The enzyme is specific for guanine, and N7 methylation must precede N2 methylation. Hypermethylation of the m7G cap of U snRNAs leads to their concentration in nuclear foci, their colocalization with coilin and the formation of canonical Cajal bodies (CBs). Plays a role in transcriptional regulation. In Mus musculus (Mouse), this protein is Trimethylguanosine synthase (Tgs1).